A 314-amino-acid polypeptide reads, in one-letter code: Secreted frizzled-related protein 5 (314 aa).

A signal peptide spans 1 to 21 (MWVAWSARTAALALLLGALHG). Positions 45 to 162 (SKPPQCLDIP…PLDNDLCIAV (118 aa)) constitute an FZ domain. 8 cysteine pairs are disulfide-bonded: Cys50–Cys113, Cys60–Cys106, Cys97–Cys132, Cys121–Cys159, Cys125–Cys149, Cys178–Cys250, Cys181–Cys252, and Cys195–Cys300. In terms of domain architecture, NTR spans 178–300 (CAQCEMEHSA…AVKFMFSYPC (123 aa)).

It belongs to the secreted frizzled-related protein (sFRP) family.

The protein resides in the secreted. Its function is as follows. Soluble frizzled-related proteins (sFRPS) function as modulators of Wnt signaling through direct interaction with Wnts. They have a role in regulating cell growth and differentiation in specific cell types. SFRP5 may be involved in determining the polarity of photoreceptor, and perhaps, other cells in the retina. In Mus musculus (Mouse), this protein is Secreted frizzled-related protein 5 (Sfrp5).